The sequence spans 294 residues: Putative glucose-6-phosphate 1-epimerase (294 aa).

2 residues coordinate substrate: R74 and R99. Residue H164 is part of the active site. D208 contributes to the substrate binding site. E267 is a catalytic residue.

The protein belongs to the glucose-6-phosphate 1-epimerase family. In terms of assembly, monomer in solution.

It carries out the reaction alpha-D-glucose 6-phosphate = beta-D-glucose 6-phosphate. Its function is as follows. Probably functions as a hexose-6-phosphate 1-epimerase. This is Putative glucose-6-phosphate 1-epimerase from Salmonella typhimurium (strain LT2 / SGSC1412 / ATCC 700720).